A 244-amino-acid chain; its full sequence is 5-oxoprolinase subunit A (244 aa).

It belongs to the LamB/PxpA family. As to quaternary structure, forms a complex composed of PxpA, PxpB and PxpC.

It carries out the reaction 5-oxo-L-proline + ATP + 2 H2O = L-glutamate + ADP + phosphate + H(+). Functionally, catalyzes the cleavage of 5-oxoproline to form L-glutamate coupled to the hydrolysis of ATP to ADP and inorganic phosphate. The sequence is that of 5-oxoprolinase subunit A from Escherichia coli (strain SE11).